We begin with the raw amino-acid sequence, 380 residues long: 4-hydroxy-3-methylbut-2-en-1-yl diphosphate synthase (flavodoxin) (380 aa).

Cysteine 273, cysteine 276, cysteine 308, and glutamate 315 together coordinate [4Fe-4S] cluster.

Belongs to the IspG family. [4Fe-4S] cluster serves as cofactor.

The enzyme catalyses (2E)-4-hydroxy-3-methylbut-2-enyl diphosphate + oxidized [flavodoxin] + H2O + 2 H(+) = 2-C-methyl-D-erythritol 2,4-cyclic diphosphate + reduced [flavodoxin]. It functions in the pathway isoprenoid biosynthesis; isopentenyl diphosphate biosynthesis via DXP pathway; isopentenyl diphosphate from 1-deoxy-D-xylulose 5-phosphate: step 5/6. Converts 2C-methyl-D-erythritol 2,4-cyclodiphosphate (ME-2,4cPP) into 1-hydroxy-2-methyl-2-(E)-butenyl 4-diphosphate. This chain is 4-hydroxy-3-methylbut-2-en-1-yl diphosphate synthase (flavodoxin), found in Leifsonia xyli subsp. xyli (strain CTCB07).